The sequence spans 142 residues: MAP3K7 C-terminal-like protein (142 aa).

As to expression, ubiquitous.

The sequence is that of MAP3K7 C-terminal-like protein (Map3k7cl) from Mus musculus (Mouse).